The sequence spans 186 residues: MEVGIISMRYAKALMAYAEERGAEERLYHELVTLAHSFRTVKGFCAVLDNPIVSVNEKFNLICTAADGDHKPSEEFIRFIRLVLKERRETYLQFMSLMYLDLYRKKKHIGVGKLITAVPVDKATEERIRQTAAHILHAYMELETVVDPSIEGGFVFDINDYRLDASIATQLKKVKQQFIDKNRRIV.

It belongs to the ATPase delta chain family. As to quaternary structure, F-type ATPases have 2 components, F(1) - the catalytic core - and F(0) - the membrane proton channel. F(1) has five subunits: alpha(3), beta(3), gamma(1), delta(1), epsilon(1). F(0) has three main subunits: a(1), b(2) and c(10-14). The alpha and beta chains form an alternating ring which encloses part of the gamma chain. F(1) is attached to F(0) by a central stalk formed by the gamma and epsilon chains, while a peripheral stalk is formed by the delta and b chains.

The protein resides in the cell inner membrane. F(1)F(0) ATP synthase produces ATP from ADP in the presence of a proton or sodium gradient. F-type ATPases consist of two structural domains, F(1) containing the extramembraneous catalytic core and F(0) containing the membrane proton channel, linked together by a central stalk and a peripheral stalk. During catalysis, ATP synthesis in the catalytic domain of F(1) is coupled via a rotary mechanism of the central stalk subunits to proton translocation. Functionally, this protein is part of the stalk that links CF(0) to CF(1). It either transmits conformational changes from CF(0) to CF(1) or is implicated in proton conduction. The protein is ATP synthase subunit delta of Bacteroides fragilis (strain ATCC 25285 / DSM 2151 / CCUG 4856 / JCM 11019 / LMG 10263 / NCTC 9343 / Onslow / VPI 2553 / EN-2).